We begin with the raw amino-acid sequence, 248 residues long: ATP synthase subunit a, chloroplastic (248 aa).

4 consecutive transmembrane segments (helical) span residues 96–116 (VPFIGTMFLFIFASNWSGALL), 135–155 (INTTVALALLTSVAYFYAGLY), 200–220 (LVVAVLVSLVPLIVPVPMMLL), and 221–241 (GLFTSGIQALIFATLAAAYIG).

This sequence belongs to the ATPase A chain family. As to quaternary structure, F-type ATPases have 2 components, CF(1) - the catalytic core - and CF(0) - the membrane proton channel. CF(1) has five subunits: alpha(3), beta(3), gamma(1), delta(1), epsilon(1). CF(0) has four main subunits: a, b, b' and c.

It localises to the plastid. Its subcellular location is the chloroplast thylakoid membrane. Key component of the proton channel; it plays a direct role in the translocation of protons across the membrane. The chain is ATP synthase subunit a, chloroplastic from Adiantum capillus-veneris (Maidenhair fern).